Here is a 515-residue protein sequence, read N- to C-terminus: uncharacterized protein (515 aa).

Disordered regions lie at residues 117–188 (DNIL…RKSQ), 362–453 (RSTS…AESM), and 496–515 (GNAVQEADTESMDDFMDYFN). 3 stretches are compositionally biased toward basic and acidic residues: residues 370–380 (KNVESETKQEE), 388–402 (PAEDETPPMKEEVIE), and 428–438 (PIKEIEDKVEP). A compositionally biased stretch (acidic residues) spans 502–515 (ADTESMDDFMDYFN).

This is an uncharacterized protein from Ostreid herpesvirus 1 (isolate France) (OsHV-1).